We begin with the raw amino-acid sequence, 432 residues long: 3-phosphoshikimate 1-carboxyvinyltransferase (432 aa).

Residues K22, S23, and R27 each contribute to the 3-phosphoshikimate site. Residue K22 participates in phosphoenolpyruvate binding. Residues G96 and R127 each contribute to the phosphoenolpyruvate site. 7 residues coordinate 3-phosphoshikimate: S173, S174, Q175, S201, D317, N340, and K344. Q175 contacts phosphoenolpyruvate. Residue D317 is the Proton acceptor of the active site. The phosphoenolpyruvate site is built by R348, R392, and K417.

It belongs to the EPSP synthase family. In terms of assembly, monomer.

The protein localises to the cytoplasm. It carries out the reaction 3-phosphoshikimate + phosphoenolpyruvate = 5-O-(1-carboxyvinyl)-3-phosphoshikimate + phosphate. It functions in the pathway metabolic intermediate biosynthesis; chorismate biosynthesis; chorismate from D-erythrose 4-phosphate and phosphoenolpyruvate: step 6/7. In terms of biological role, catalyzes the transfer of the enolpyruvyl moiety of phosphoenolpyruvate (PEP) to the 5-hydroxyl of shikimate-3-phosphate (S3P) to produce enolpyruvyl shikimate-3-phosphate and inorganic phosphate. This is 3-phosphoshikimate 1-carboxyvinyltransferase from Mannheimia haemolytica (Pasteurella haemolytica).